The sequence spans 157 residues: Aspartate carbamoyltransferase regulatory chain (157 aa).

Positions 108, 113, 138, and 141 each coordinate Zn(2+).

This sequence belongs to the PyrI family. In terms of assembly, contains catalytic and regulatory chains. Zn(2+) serves as cofactor.

In terms of biological role, involved in allosteric regulation of aspartate carbamoyltransferase. This Korarchaeum cryptofilum (strain OPF8) protein is Aspartate carbamoyltransferase regulatory chain.